A 126-amino-acid polypeptide reads, in one-letter code: Small ribosomal subunit protein uS12c (126 aa).

Belongs to the universal ribosomal protein uS12 family. Part of the 30S ribosomal subunit.

It is found in the plastid. Its subcellular location is the chloroplast. Its function is as follows. With S4 and S5 plays an important role in translational accuracy. Located at the interface of the 30S and 50S subunits. This is Small ribosomal subunit protein uS12c (rps12) from Trieres chinensis (Marine centric diatom).